The chain runs to 213 residues: ATP synthase peripheral stalk subunit OSCP, mitochondrial (213 aa).

The transit peptide at 1–23 directs the protein to the mitochondrion; it reads MAAPAVSGFSRQVRCFSTSVVRP. An SIFI-degron motif is present at residues 5–23; the sequence is AVSGFSRQVRCFSTSVVRP. N6-acetyllysine occurs at positions 54, 60, 70, and 73. N6-succinyllysine is present on K90. N6-acetyllysine; alternate is present on residues K100 and K158. N6-succinyllysine; alternate occurs at positions 100 and 158. N6-acetyllysine is present on residues K172, K176, and K192. N6-succinyllysine is present on K199.

Belongs to the ATPase delta chain family. As to quaternary structure, component of the ATP synthase complex composed at least of ATP5F1A/subunit alpha, ATP5F1B/subunit beta, ATP5MC1/subunit c (homooctomer), MT-ATP6/subunit a, MT-ATP8/subunit 8, ATP5ME/subunit e, ATP5MF/subunit f, ATP5MG/subunit g, ATP5MK/subunit k, ATP5MJ/subunit j, ATP5F1C/subunit gamma, ATP5F1D/subunit delta, ATP5F1E/subunit epsilon, ATP5PF/subunit F6, ATP5PB/subunit b, ATP5PD/subunit d, ATP5PO/subunit OSCP. ATP synthase complex consists of a soluble F(1) head domain (subunits alpha(3) and beta(3)) - the catalytic core - and a membrane F(0) domain - the membrane proton channel (subunits c, a, 8, e, f, g, k and j). These two domains are linked by a central stalk (subunits gamma, delta, and epsilon) rotating inside the F1 region and a stationary peripheral stalk (subunits F6, b, d, and OSCP). In response to mitochondrial stress, the precursor protein is ubiquitinated by the SIFI complex in the cytoplasm before mitochondrial import, leading to its degradation. Within the SIFI complex, UBR4 initiates ubiquitin chain that are further elongated or branched by KCMF1.

Its subcellular location is the mitochondrion. The protein localises to the mitochondrion inner membrane. In terms of biological role, subunit OSCP, of the mitochondrial membrane ATP synthase complex (F(1)F(0) ATP synthase or Complex V) that produces ATP from ADP in the presence of a proton gradient across the membrane which is generated by electron transport complexes of the respiratory chain. ATP synthase complex consist of a soluble F(1) head domain - the catalytic core - and a membrane F(1) domain - the membrane proton channel. These two domains are linked by a central stalk rotating inside the F(1) region and a stationary peripheral stalk. During catalysis, ATP synthesis in the catalytic domain of F(1) is coupled via a rotary mechanism of the central stalk subunits to proton translocation. In vivo, can only synthesize ATP although its ATP hydrolase activity can be activated artificially in vitro. Part of the complex F(0) domain. Part of the complex F(0) domain and the peripheric stalk, which acts as a stator to hold the catalytic alpha(3)beta(3) subcomplex and subunit a/ATP6 static relative to the rotary elements. This is ATP synthase peripheral stalk subunit OSCP, mitochondrial from Rhinolophus ferrumequinum (Greater horseshoe bat).